The chain runs to 263 residues: MLTNNNNHPFHMVDYSPWPLTGAIGAMILTSGMTKWFHTFNMNLLMIGMTVIVLTMIQWWRDVVREGTFQGLHTKLVSKGLRWGMILFIASEVLFFASFFWAFFNSSLAPTIELGMKWPPMGIQPFNPIQIPLLNTAILLASGVTITWAHHSIMECNHSQALQGLFFTVMLGFYFTLLQMYEYWEAPFTIADAVYGSTFFVATGFHGLHVIIGTTFLLTCLIRHMMNQFSSNHHFGFEAAAWYWHFVDVVWLFLYLSIYWWGS.

The next 7 helical transmembrane spans lie at 9–29 (PFHM…AMIL), 40–60 (FNMN…IQWW), 84–104 (GMIL…WAFF), 129–149 (IQIP…ITWA), 161–181 (ALQG…LQMY), 198–218 (TFFV…TFLL), and 241–261 (AWYW…IYWW).

It belongs to the cytochrome c oxidase subunit 3 family. In terms of assembly, component of the cytochrome c oxidase (complex IV, CIV), a multisubunit enzyme composed of a catalytic core of 3 subunits and several supernumerary subunits. The complex exists as a monomer or a dimer and forms supercomplexes (SCs) in the inner mitochondrial membrane with ubiquinol-cytochrome c oxidoreductase (cytochrome b-c1 complex, complex III, CIII).

It localises to the mitochondrion inner membrane. The enzyme catalyses 4 Fe(II)-[cytochrome c] + O2 + 8 H(+)(in) = 4 Fe(III)-[cytochrome c] + 2 H2O + 4 H(+)(out). Its function is as follows. Component of the cytochrome c oxidase, the last enzyme in the mitochondrial electron transport chain which drives oxidative phosphorylation. The respiratory chain contains 3 multisubunit complexes succinate dehydrogenase (complex II, CII), ubiquinol-cytochrome c oxidoreductase (cytochrome b-c1 complex, complex III, CIII) and cytochrome c oxidase (complex IV, CIV), that cooperate to transfer electrons derived from NADH and succinate to molecular oxygen, creating an electrochemical gradient over the inner membrane that drives transmembrane transport and the ATP synthase. Cytochrome c oxidase is the component of the respiratory chain that catalyzes the reduction of oxygen to water. Electrons originating from reduced cytochrome c in the intermembrane space (IMS) are transferred via the dinuclear copper A center (CU(A)) of subunit 2 and heme A of subunit 1 to the active site in subunit 1, a binuclear center (BNC) formed by heme A3 and copper B (CU(B)). The BNC reduces molecular oxygen to 2 water molecules using 4 electrons from cytochrome c in the IMS and 4 protons from the mitochondrial matrix. The sequence is that of Cytochrome c oxidase subunit 3 (COIII) from Locusta migratoria (Migratory locust).